The primary structure comprises 198 residues: Pre-histone-like nucleoprotein (198 aa).

Ser-2 carries the post-translational modification N-acetylserine; by host. Positions 2–24 are excised as a propeptide; it reads SILISPSNNTGWGLRFPSKMFGG. Positions 24 to 55 are disordered; the sequence is GAKKRSDQHPVRVRGHYRAPWGAHKRGRTGRT. Residues Lys-27 and Lys-48 each carry the N6-acetyllysine; by host modification. Over residues 34–52 the composition is skewed to basic residues; sequence VRVRGHYRAPWGAHKRGRT. 2 positions are modified to phosphothreonine; by host: Thr-55 and Thr-74. Phosphoserine; by host is present on residues Ser-183 and Ser-185. The Nuclear localization signal motif lies at 188–198; the sequence is RVPVRTRPPRN.

It belongs to the adenoviridae histone-like nucleoprotein family. As to quaternary structure, interacts with the core-capsid bridging protein; this interaction bridges the virus core to the capsid. Interacts with host NPM1; this interaction might play a role in placing the pre-histone-like nucleoprotein on the viral DNA or regulating viral gene expression. Interacts with host HMGB1; this interaction inhibits host immune response. In terms of processing, cleaved near the N-terminus by the viral protease during virion maturation to form the mature protein.

The protein resides in the virion. It is found in the host nucleus. The protein localises to the host nucleolus. In terms of biological role, plays a role in the inhibition of host immune response within the nucleus. Interacts with cellular nucleosomes and immobilizes the host immune danger signal HMGB1 on chromatin. In turn, prevents HMGB1 release out of the cell and thus decreases inflammation. Also plays a role in the wrapping and condensation of the viral DNA. May also promote viral genome import into the nucleus. This chain is Pre-histone-like nucleoprotein, found in Human adenovirus C serotype 2 (HAdV-2).